The chain runs to 257 residues: Transmembrane protein C257L (257 aa).

2 consecutive transmembrane segments (helical) span residues 123–143 (LELL…FTAL) and 163–183 (IMIF…YVLV).

The protein belongs to the asfivirus C257R family.

It localises to the host membrane. Its subcellular location is the virion. This is Transmembrane protein C257L from African swine fever virus (isolate Pig/Kenya/KEN-50/1950) (ASFV).